Here is a 343-residue protein sequence, read N- to C-terminus: MDLNTILIILGILALIGLVAHGIWSNRREKSQYFDNENAFHRNPQSTGRPSAQASQPMTPNFAQPAKETEQIRQTYQEPQVRQMSSSPEQQTRPTAQAMPENRAEFNPNTVQPEQQPLDFNAAENIKITLPNTETRAGGAEPIRYEYHAEEERSAPLEQTFNQPVYTEDRAVPDMQVSLRQPAPESPISQPTLQQPVNDAPAYQHSQPAPAEPTDFIMLYVVAPENRQFHGPSLAQALDNLGFIFGQGNIYHRHLDLTVASPAIFSVANINQPGTFNPHGMQDFSTVGVALFMQLPVAGNPRANLKMMIQAAKNLASQLGGFVLTEQQEEFDVMAEAAYLARV.

Topologically, residues 1-4 (MDLN) are periplasmic. A helical membrane pass occupies residues 5–25 (TILIILGILALIGLVAHGIWS). The Cytoplasmic portion of the chain corresponds to 26-343 (NRREKSQYFD…MAEAAYLARV (318 aa)). A disordered region spans residues 39–98 (AFHRNPQSTGRPSAQASQPMTPNFAQPAKETEQIRQTYQEPQVRQMSSSPEQQTRPTAQA). 2 stretches are compositionally biased toward polar residues: residues 43-62 (NPQSTGRPSAQASQPMTPNF) and 72-95 (IRQTYQEPQVRQMSSSPEQQTRPT).

Belongs to the ZipA family. Interacts with FtsZ via their C-terminal domains.

Its subcellular location is the cell inner membrane. Functionally, essential cell division protein that stabilizes the FtsZ protofilaments by cross-linking them and that serves as a cytoplasmic membrane anchor for the Z ring. Also required for the recruitment to the septal ring of downstream cell division proteins. In Actinobacillus succinogenes (strain ATCC 55618 / DSM 22257 / CCUG 43843 / 130Z), this protein is Cell division protein ZipA.